We begin with the raw amino-acid sequence, 1391 residues long: CAP-Gly domain-containing linker protein 1 (1391 aa).

The interval 1–53 is disordered; it reads MSMLKPSGLKAPTKILKPGSTALKTPAAAAAPVEKTIPSEKASGPPSSETQEE. At Ser48 the chain carries Phosphoserine. Thr50 carries the phosphothreonine modification. In terms of domain architecture, CAP-Gly 1 spans 78 to 120; sequence GETQFAPGQWAGIVLDEPIGKNDGSVAGVRYFQCEPLKGIFTR. The segment at 97 to 101 is important for tubulin binding; that stretch reads GKNDG. Residues 129–182 form a disordered region; that stretch reads QAEDEANGLQAAPGRTASPLSTAAATMVSSSPATPSNIPHKPSQSTAKEPSATP. Ser146 carries the post-translational modification Phosphoserine. Residues 146-182 are compositionally biased toward polar residues; sequence SPLSTAAATMVSSSPATPSNIPHKPSQSTAKEPSATP. Thr181 bears the Phosphothreonine mark. Phosphoserine is present on residues Ser194, Ser196, Ser199, and Ser203. In terms of domain architecture, CAP-Gly 2 spans 231–273; the sequence is GETDFAKGEWCGVELDEPLGKNDGAVAGTRYFQCQPKYGLFAP. The segment covering 302–331 has biased composition (low complexity); that stretch reads TPASLKRSPSASSLSSMSSVASSVSSKPSR. Residues 302–336 are disordered; it reads TPASLKRSPSASSLSSMSSVASSVSSKPSRTGLLT. Position 309 is a phosphoserine (Ser309). Ser311 is subject to Phosphoserine; by PKA. Ser314, Ser347, and Ser1189 each carry phosphoserine. A coiled-coil region spans residues 349–1306; it reads TTALQEALKE…VEMMSEAALN (958 aa). The tract at residues 1251–1272 is disordered; it reads KRQLSSSSGNTDAQAEEDERAQ. Position 1317 is a phosphoserine (Ser1317). The CCHC-type zinc-finger motif lies at 1370 to 1387; it reads PYCEICEMFGHWATNCND.

In terms of assembly, interacts with MTOR; phosphorylates and regulates CLIP1. Interacts (via CAP-Gly domains) with tubulin. Interacts with SLAIN2. Interacts with TUBA1B, MAPRE1 and MAPRE3. Interacts (via zinc finger) with DCTN1. Binds preferentially to tyrosinated microtubules, and only marginally to detyrosinated microtubules. Phosphorylated. Phosphorylation induces conformational changes by increasing the affinity of the N-terminus for C-terminus, resulting in inhibition of its function thus decreasing its binding to microtubules and DCTN1. Exhibits a folded, autoinhibited conformation when phosphorylated and an open conformation when dephosphorylated with increased binding affinity to microtubules and DCTN1. Phosphorylation regulates its recruitment to tyrosinated microtubules and the recruitment of vesicular cargo to microtubules in neurons. Phosphorylation by MTOR may positively regulate CLIP1 association with microtubules. Expressed in the testes (at protein level).

Its subcellular location is the cytoplasm. It is found in the cytoskeleton. The protein resides in the cytoplasmic vesicle membrane. It localises to the cell projection. The protein localises to the ruffle. Its function is as follows. Binds to the plus end of microtubules and regulates the dynamics of the microtubule cytoskeleton. Promotes microtubule growth and microtubule bundling. Links cytoplasmic vesicles to microtubules and thereby plays an important role in intracellular vesicle trafficking. Plays a role macropinocytosis and endosome trafficking. In Mus musculus (Mouse), this protein is CAP-Gly domain-containing linker protein 1 (Clip1).